A 206-amino-acid polypeptide reads, in one-letter code: Small ribosomal subunit protein uS4A (206 aa).

In terms of domain architecture, S4 RNA-binding spans 98-164; sequence MRLDNVVYRL…EKFKTFAENP (67 aa).

The protein belongs to the universal ribosomal protein uS4 family. As to quaternary structure, part of the 30S ribosomal subunit. Contacts protein S5. The interaction surface between S4 and S5 is involved in control of translational fidelity.

In terms of biological role, one of the primary rRNA binding proteins, it binds directly to 16S rRNA where it nucleates assembly of the body of the 30S subunit. With S5 and S12 plays an important role in translational accuracy. In Clostridium botulinum (strain ATCC 19397 / Type A), this protein is Small ribosomal subunit protein uS4A.